The chain runs to 308 residues: 1-acyl-sn-glycerol-3-phosphate acyltransferase (308 aa).

The next 3 membrane-spanning stretches (helical) occupy residues 65 to 85 (FLSMMVTTIVWNMIMLILLPW), 124 to 144 (AIYICNHASLVDIFLIMWLIP), and 148 to 168 (VTIAKKEIIWYPLFGQLYVLA). Residues 130-135 (HASLVD) carry the HXXXXD motif motif.

Belongs to the 1-acyl-sn-glycerol-3-phosphate acyltransferase family.

Its subcellular location is the membrane. The catalysed reaction is a 1-acyl-sn-glycero-3-phosphate + an acyl-CoA = a 1,2-diacyl-sn-glycero-3-phosphate + CoA. Functionally, converts lysophosphatidic acid (LPA) into phosphatidic acid by incorporating acyl moiety at the 2 position. This enzyme shows a preference for medium-chain-length fatty acyl-coenzyme a substrates. The polypeptide is 1-acyl-sn-glycerol-3-phosphate acyltransferase (Cocos nucifera (Coconut palm)).